We begin with the raw amino-acid sequence, 297 residues long: Calponin-1 (297 aa).

The region spanning 28–131 is the Calponin-homology (CH) domain; the sequence is HQREQELREW…STLLALASMA (104 aa). Calponin-like repeat units follow at residues 164–189, 204–229, and 243–268; these read IGLQ…RHLY, ISLQ…RQIF, and VSLQ…RQVY. Thr-170 is subject to Phosphothreonine; by ROCK2. Position 175 is a phosphoserine; by ROCK2 (Ser-175). Thr-180 and Thr-184 each carry phosphothreonine; by ROCK2. Thr-259 carries the post-translational modification Phosphothreonine; by ROCK2.

Belongs to the calponin family. Part of cGMP kinase signaling complex at least composed of ACTA2/alpha-actin, CNN1/calponin H1, PLN/phospholamban, PRKG1 and ITPR1.

Its function is as follows. Thin filament-associated protein that is implicated in the regulation and modulation of smooth muscle contraction. It is capable of binding to actin, calmodulin and tropomyosin. The interaction of calponin with actin inhibits the actomyosin Mg-ATPase activity. The sequence is that of Calponin-1 (CNN1) from Ovis aries (Sheep).